We begin with the raw amino-acid sequence, 428 residues long: Glutamate-1-semialdehyde 2,1-aminomutase (428 aa).

The residue at position 267 (lysine 267) is an N6-(pyridoxal phosphate)lysine.

Belongs to the class-III pyridoxal-phosphate-dependent aminotransferase family. HemL subfamily. As to quaternary structure, homodimer. Pyridoxal 5'-phosphate is required as a cofactor.

It localises to the cytoplasm. It catalyses the reaction (S)-4-amino-5-oxopentanoate = 5-aminolevulinate. The protein operates within porphyrin-containing compound metabolism; protoporphyrin-IX biosynthesis; 5-aminolevulinate from L-glutamyl-tRNA(Glu): step 2/2. The polypeptide is Glutamate-1-semialdehyde 2,1-aminomutase (Sulfurihydrogenibium sp. (strain YO3AOP1)).